Here is a 587-residue protein sequence, read N- to C-terminus: Putative ankyrin repeat protein L66 (587 aa).

16 ANK repeats span residues 77 to 106 (DKNLSMLLATKYGKLNIIKYLVRNGTDIRI), 108 to 136 (NNYPVRKASKYGYLDIVKYLIREDCDVSD), 137 to 166 (YDNYALRKATKNGYFEIVKLLVDQGADVHC), 168 to 196 (DNAPIKLACKYGYSKMVKFFHKKFLDVNY), 199 to 228 (NEDLLLKLASSGGHYKIVKYLVTKSNNIHF), 230 to 256 (DSLISVIKKGHLDILKYFISKGVILGN), 259 to 288 (NIRNATLMACKKGHYNVVEYLIDNIISIEN), 302 to 331 (FKKNLITNTCISGNLDMLKYLISKGINVAF), 333 to 360 (DNLPIKISACHDHLHLVKYLVSISNVKI), 361 to 390 (NYENILISASENGCIKVVKYLVDKGVNVKD), 392 to 418 (TAIYSAGINGYLQIVKFLESNGADLIK), 420 to 448 (HNEIFLECSSNGYLNVIKYIVSKYNINKS), 449 to 478 (IYDKALIIASKNNQLKTVKYLVHMGADIKS), 480 to 507 (KFHDMEKIIDNDLELLKYLVSKGLKINN), 509 to 537 (YKNLISKIIMNNDLDKLKYLISLGVNMKC), and 539 to 567 (RIDTFNSCIQNRNKEMLSYLISRKIKLIC).

The sequence is that of Putative ankyrin repeat protein L66 from Acanthamoeba polyphaga mimivirus (APMV).